Reading from the N-terminus, the 622-residue chain is Zinc finger protein ZIC 5 (622 aa).

Disordered regions lie at residues 50 to 171, 190 to 223, 232 to 251, and 321 to 349; these read MHLH…KGHS, HGAP…SASG, GSAL…GHPL, and PGPH…HLPG. Over residues 126 to 151 the composition is skewed to pro residues; sequence APPPPAPPLPPSQSSSPPPPPPPPPA. Over residues 329-340 the composition is skewed to pro residues; the sequence is APPPAPPPAPAP. A C2H2-type 1; degenerate zinc finger spans residues 422–444; it reads EDCPREGKPFKAKYKLINHIRVH. 3 C2H2-type zinc fingers span residues 450–474, 480–504, and 510–534; these read FPCP…KRTH, FKCE…SHVH, and YYCK…MKIH. Disordered stretches follow at residues 531–573 and 590–622; these read MKIH…STLS and APSH…RTIH. A phosphoserine mark is found at Ser537, Ser541, and Ser559. Polar residues predominate over residues 595-604; the sequence is HTPSSNGTTS.

The protein belongs to the GLI C2H2-type zinc-finger protein family.

Its subcellular location is the nucleus. Essential for neural crest development, converting cells from an epidermal fate to a neural crest cell fate. Binds to DNA. In Mus musculus (Mouse), this protein is Zinc finger protein ZIC 5 (Zic5).